A 513-amino-acid chain; its full sequence is Probable vesicular acetylcholine transporter-A (513 aa).

Topologically, residues 1-39 (MATEESGGLAQTAAVKLSEMGERTKQLGNAIQDPERQRR) are cytoplasmic. The chain crosses the membrane as a helical span at residues 40–60 (IILVIVCVALLLDNMLYMVIV). Topologically, residues 61-98 (PIVPDYLAHLESESEQAHVKGNSSINITQNENFDLQIG) are lumenal, vesicle. N-linked (GlcNAc...) asparagine glycosylation is found at Asn82 and Asn86. Residues 99–119 (VLFASKAILQLLVNPLTGTFI) form a helical membrane-spanning segment. Over 120–125 (DRVGYD) the chain is Cytoplasmic. The chain crosses the membrane as a helical span at residues 126 to 146 (IPLLIGLSIMFVSTCIFAFAE). Topologically, residues 147-156 (NYATLFMARS) are lumenal, vesicle. Residues 157-174 (LQGLGSAFADTSGIAMIA) form a helical membrane-spanning segment. Topologically, residues 175-186 (DKYAEESERSRA) are cytoplasmic. The helical transmembrane segment at 187-207 (LGIALAFISFGSLAAPPFGGV) threads the bilayer. At 208 to 215 (LYEFAGKR) the chain is on the lumenal, vesicle side. A helical membrane pass occupies residues 216 to 236 (FPFIALACVCLADGILCLTVL). Residues 237–257 (KPFSSRTRENMPVGTPIYKLM) lie on the Cytoplasmic side of the membrane. The helical transmembrane segment at 258-278 (IDPYIAVVAGALTTCNIPLAF) threads the bilayer. Residues 279–296 (LEPTIANWMEETMNASQW) are Lumenal, vesicle-facing. An N-linked (GlcNAc...) asparagine glycan is attached at Asn292. Residues 297–317 (QIGITWLPAFFPHILGVYLTV) traverse the membrane as a helical segment. Residues 318 to 327 (KLAAKYPHLQ) lie on the Cytoplasmic side of the membrane. A helical membrane pass occupies residues 328 to 348 (WFYGALGMVIIGASSCIVPAC). The Lumenal, vesicle portion of the chain corresponds to 349-353 (KNFEQ). Residues 354–374 (LIIPLCGVCFGIALVDTALLP) traverse the membrane as a helical segment. The Cytoplasmic segment spans residues 375 to 390 (TLAFLVDVRHVSVYGS). Residues 391–411 (VYAIADISYCVAYALGPIVAG) form a helical membrane-spanning segment. At 412–418 (KIVHDLG) the chain is on the lumenal, vesicle side. The chain crosses the membrane as a helical span at residues 419–439 (FVQLNLGMGLANVLYAPALLL). Residues 440-513 (LRNVSLMKPS…EEETSEPEYI (74 aa)) are Cytoplasmic-facing. The interval 475 to 513 (RKKHGYSSSGNCVPIDENGTFAGQSKSFSEEETSEPEYI) is disordered. Over residues 504–513 (EEETSEPEYI) the composition is skewed to acidic residues.

This sequence belongs to the major facilitator superfamily. Vesicular transporter family.

It is found in the membrane. Involved in acetylcholine transport into synaptic vesicles. This chain is Probable vesicular acetylcholine transporter-A, found in Danio rerio (Zebrafish).